Here is a 464-residue protein sequence, read N- to C-terminus: UDP-glycosyltransferase 79A6 (464 aa).

The Proton acceptor role is filled by H24. H24 contributes to the an anthocyanidin binding site. The active-site Charge relay is the D115. Residues S278, H357, S362, and E365 each contribute to the UDP-beta-L-rhamnose site. G380 provides a ligand contact to an anthocyanidin.

The protein belongs to the UDP-glycosyltransferase family. In terms of tissue distribution, expressed in young leaves, flowers, pods and pod shells. Barely detected in seeds, roots and root nodules.

The catalysed reaction is a flavonol 3-O-beta-D-glucoside + UDP-beta-L-rhamnose = a flavonol 3-O-[alpha-L-rhamnosyl-(1-&gt;6)-beta-D-glucoside] + UDP + H(+). Its function is as follows. Flavonol 3-O-glucoside (1-&gt;6) rhamnosyltransferase converting kaempferol 3-O-glucoside to kaempferol 3-O-rutinoside and utilizing 3-O-glucosylated/galactosylated flavonols and UDP-rhamnose as substrates. Prefers kaempferol to quercetin as an aglycon, and 3-O-galactosides to 3-O-glucosides as a glycosylation pattern. This chain is UDP-glycosyltransferase 79A6, found in Glycine max (Soybean).